The primary structure comprises 228 residues: MYSIVAEESGLLPRERLLQKGAEVLSDQELLAIVLRTGTRSESVLSMANRILKGMTSLADLSRLSLNELQEIPGIGRVKSIELKAMVELAKRIEKAELARSEQIMSSQQVARRMMLDIGDKPQEHLVAIYLDTQNRIIQQKTVFIGGVRRSIAEPREILYYACHLMATSLIVVHNHPSGEAYPSRNDIDFTQKIKRSCDDLGICLLDHLIVGKSTYYSFREEREDFEL.

In terms of domain architecture, MPN spans 103–225 (QIMSSQQVAR…YYSFREERED (123 aa)). 3 residues coordinate Zn(2+): His-174, His-176, and Asp-187. Positions 174 to 187 (HNHPSGEAYPSRND) match the JAMM motif motif.

This sequence belongs to the UPF0758 family.

The protein is UPF0758 protein stu1465 of Streptococcus thermophilus (strain ATCC BAA-250 / LMG 18311).